The sequence spans 106 residues: Large ribosomal subunit protein uL23 (106 aa).

This sequence belongs to the universal ribosomal protein uL23 family. In terms of assembly, part of the 50S ribosomal subunit. Contacts protein L29, and trigger factor when it is bound to the ribosome.

In terms of biological role, one of the early assembly proteins it binds 23S rRNA. One of the proteins that surrounds the polypeptide exit tunnel on the outside of the ribosome. Forms the main docking site for trigger factor binding to the ribosome. The polypeptide is Large ribosomal subunit protein uL23 (Neisseria meningitidis serogroup A / serotype 4A (strain DSM 15465 / Z2491)).